The primary structure comprises 1392 residues: DNA-directed RNA polymerase subunit beta'' (1392 aa).

Zn(2+) contacts are provided by C224, C295, C302, and C305.

The protein belongs to the RNA polymerase beta' chain family. RpoC2 subfamily. As to quaternary structure, in plastids the minimal PEP RNA polymerase catalytic core is composed of four subunits: alpha, beta, beta', and beta''. When a (nuclear-encoded) sigma factor is associated with the core the holoenzyme is formed, which can initiate transcription. It depends on Zn(2+) as a cofactor.

The protein localises to the plastid. It localises to the chloroplast. It catalyses the reaction RNA(n) + a ribonucleoside 5'-triphosphate = RNA(n+1) + diphosphate. Functionally, DNA-dependent RNA polymerase catalyzes the transcription of DNA into RNA using the four ribonucleoside triphosphates as substrates. This chain is DNA-directed RNA polymerase subunit beta'', found in Eucalyptus globulus subsp. globulus (Tasmanian blue gum).